The sequence spans 240 residues: Eukaryotic translation initiation factor 4E-2 (240 aa).

Positions 1–29 (MVVMDSPVSGRMADQNIDPNTTTSPSPIE) are disordered. The span at 17–26 (IDPNTTTSPS) shows a compositional bias: polar residues. 2 EIF4G-binding regions span residues 65-68 (HCFQ) and 75-111 (FDNP…NNIH). Residues 83–88 (NQVIWG), Lys115, and 133–134 (WE) contribute to the mRNA site. Cysteines 138 and 176 form a disulfide. An EIF4G-binding region spans residues 159 to 168 (NTLLALVGEQ). Residues 183 to 188 (RTRGDR) and 228 to 232 (KTLDR) each bind mRNA.

The protein belongs to the eukaryotic initiation factor 4E family. In terms of assembly, EIF4F is a multi-subunit complex, the composition of which varies with external and internal environmental conditions. It is composed of at least EIF4A, EIF4E and EIF4G. EIF4E is also known to interact with other partners. In higher plants two isoforms of EIF4F have been identified, named isoform EIF4F and isoform EIF(iso)4F. Isoform EIF4F has subunits p220 and p26, whereas isoform EIF(iso)4F has subunits p82 and p28. According to the redox status, the Cys-138-Cys-176 disulfide bridge may have a role in regulating protein function by affecting its ability to bind capped mRNA.

The protein resides in the nucleus. It is found in the cytoplasm. In terms of biological role, component of the protein complex eIF4F, which is involved in the recognition of the mRNA cap, ATP-dependent unwinding of 5'-terminal secondary structure and recruitment of mRNA to the ribosome. Recognizes and binds the 7-methylguanosine-containing mRNA cap during an early step in the initiation of protein synthesis and facilitates ribosome binding by inducing the unwinding of the mRNAs secondary structures. This chain is Eukaryotic translation initiation factor 4E-2, found in Arabidopsis thaliana (Mouse-ear cress).